The chain runs to 379 residues: MAPNIRKSHPLLKIINSSLIDLPSPSNISTWWNFGSLLGICLITQILTGLLLAMHYTADTSLAFSSVAHTCRNVQYGWLIRNLHANGASFFFICIYLHIGRGFYYGSYLYKETWNTGVILLLTLMATAFVGYVLPWGQMSFWGATVITNLFSAIPYIGQTLVEWAWGGFSVDNPTLTRFFALHFLLPFLIAGITLIHLTFLHESGSNNPLGIVSHCDKIPFHPYFSLKDILGFTLMFIPLLILAFFSPNFLGDPENFTPANPLVTPPHIKPEWYFLFAYAILRSIPNKLGGVLALAASVLILFLIPFLHKSKQRSMTFRPLSQVLFWFLVANLLILTWIGSQPVEHPFIIIGQMASFTYFLILLILFPTIGDLENKMLY.

4 helical membrane passes run 34 to 54, 78 to 99, 114 to 134, and 179 to 199; these read FGSL…LLAM, WLIR…YLHI, WNTG…GYVL, and FFAL…IHLT. Heme b is bound by residues histidine 84 and histidine 98. Histidine 183 and histidine 197 together coordinate heme b. Position 202 (histidine 202) interacts with a ubiquinone. A run of 4 helical transmembrane segments spans residues 227 to 247, 289 to 309, 321 to 341, and 348 to 368; these read LKDI…AFFS, LGGV…PFLH, LSQV…WIGS, and FIII…ILFP.

This sequence belongs to the cytochrome b family. As to quaternary structure, the cytochrome bc1 complex contains 11 subunits: 3 respiratory subunits (MT-CYB, CYC1 and UQCRFS1), 2 core proteins (UQCRC1 and UQCRC2) and 6 low-molecular weight proteins (UQCRH/QCR6, UQCRB/QCR7, UQCRQ/QCR8, UQCR10/QCR9, UQCR11/QCR10 and a cleavage product of UQCRFS1). This cytochrome bc1 complex then forms a dimer. Heme b is required as a cofactor.

The protein resides in the mitochondrion inner membrane. In terms of biological role, component of the ubiquinol-cytochrome c reductase complex (complex III or cytochrome b-c1 complex) that is part of the mitochondrial respiratory chain. The b-c1 complex mediates electron transfer from ubiquinol to cytochrome c. Contributes to the generation of a proton gradient across the mitochondrial membrane that is then used for ATP synthesis. The protein is Cytochrome b (MT-CYB) of Casuarius bennetti (Dwarf cassowary).